A 166-amino-acid polypeptide reads, in one-letter code: Ribosome maturation factor RimP (166 aa).

The protein belongs to the RimP family.

It is found in the cytoplasm. Its function is as follows. Required for maturation of 30S ribosomal subunits. This Rickettsia akari (strain Hartford) protein is Ribosome maturation factor RimP.